A 371-amino-acid polypeptide reads, in one-letter code: Putative HAD-like hydrolase Noc_2718 (371 aa).

Residues 1–288 (MKQKILLCSD…TGREESAEEE (288 aa)) are HAD-like hydrolase. Positions 291–371 (QSCAIYRSCK…QLSSREYRRS (81 aa)) constitute a YcgL domain.

The protein in the N-terminal section; belongs to the HAD-like hydrolase superfamily.

The chain is Putative HAD-like hydrolase Noc_2718 from Nitrosococcus oceani (strain ATCC 19707 / BCRC 17464 / JCM 30415 / NCIMB 11848 / C-107).